The primary structure comprises 620 residues: MALLQISEPGDSPAPHQRKLAVGIDLGTTNSLVAAVRSSVPEVLADAQGQVLLPSAVRYLDGGAVRIGREALLEQARDPLNTIVSVKRFMGRSAADAAASGAPYEFVDAPGMVRLRTVQGDLSPVEVSAQILAVLRQRAEDVLGDDLVGAVITVPAYFDDAQRQATRDAARLAGLNVLRLLNEPTAAAIAYGLDQAAEGIYAVYDLGGGTFDISILRLTQGVFEVIATGGDTALGGDDFDSAIVAHACAGEDVAALPVADRRALLVAARAAREALTDQAQAPFEVTLRDGRAIQATLTRAQFEQLAEPLVGRTLDSARRALRDAGLAVGDVRGVVMVGGATRMPVVRQQVGALFGTEPLTNLDPDQVVALGAALQANLLAGNRALGEDWLLLDVIPLSLGLETMGGLVERIIPRNSTIPVARAQEFTTFKDGQTAMSVHVVQGERDLVSDCRSLARFELRGIPPMVAGAARIRVTFQVDADGLLSVTAREQSTGVEAAVAVKPSYGLSDDEIARMLADSVTQADSDARARMLREQQVEARQLVESVGAALAADGDLLDPAERATVDQRLQAAAQAQSLDDVEAVRAAVQALSDATEEFAARRMDRSIRSALAGRKLDELA.

The protein belongs to the heat shock protein 70 family.

Its function is as follows. Chaperone involved in the maturation of iron-sulfur cluster-containing proteins. Has a low intrinsic ATPase activity which is markedly stimulated by HscB. This Bordetella pertussis (strain Tohama I / ATCC BAA-589 / NCTC 13251) protein is Chaperone protein HscA homolog.